A 172-amino-acid chain; its full sequence is C-phycocyanin beta chain (172 aa).

The residue at position 72 (N72) is an N4-methylasparagine. Residues C82 and C153 each contribute to the (2R,3E)-phycocyanobilin site.

It belongs to the phycobiliprotein family. As to quaternary structure, heterodimer of an alpha and a beta subunit, which further assembles into trimers and the trimers into hexamers. The basic functional unit of phycobiliproteins is a ring-shaped hexamer formed from two back-to-back trimers contacting via the alpha chain subunits. The trimers are composed of alpha/beta subunit heterodimers arranged around a three-fold axis of symmetry. The phycoerythrins also contain a gamma subunit which is located in the center of the hexamer. Contains two covalently linked bilin chromophores.

It is found in the plastid. It localises to the chloroplast thylakoid membrane. Light-harvesting photosynthetic bile pigment-protein from the phycobiliprotein complex (phycobilisome, PBS). Phycocyanin is the major phycobiliprotein in the PBS rod. This chain is C-phycocyanin beta chain (cpcB), found in Porphyra purpurea (Red seaweed).